Reading from the N-terminus, the 372-residue chain is Coxsackievirus and adenovirus receptor homolog (372 aa).

Residues 1-22 (MDMRTSFLCVTYVILLTGSACG) form the signal peptide. Ig-like C2-type domains follow at residues 23–140 (LQIT…YLLT) and 130–234 (PGIA…VTIT). Residues 23–241 (LQITSTGQTS…TITQPPNTAG (219 aa)) lie on the Extracellular side of the membrane. Disulfide bonds link Cys-45-Cys-124, Cys-150-Cys-227, and Cys-166-Cys-216. Asn-205 carries N-linked (GlcNAc...) asparagine glycosylation. The helical transmembrane segment at 242-262 (IIAGVIICILLLLILLALILF) threads the bilayer. Residues 263–372 (CCCRARHKKK…PAQNKDGSIV (110 aa)) are Cytoplasmic-facing. Positions 286–352 (PPPKSRVSTA…PPSRMAGPNL (67 aa)) are disordered. Residues 291 to 317 (RVSTARSFTSVGSQRSSLGSMSPSNLH) show a composition bias toward polar residues. Positions 318 to 336 (EYSKPQYDKIPSEEYDRPP) are enriched in basic and acidic residues.

In terms of assembly, monomer. Probably homodimer formed by 2 molecules on adjacent cells.

It localises to the cell membrane. The protein resides in the basolateral cell membrane. It is found in the cell junction. The protein localises to the tight junction. Its subcellular location is the adherens junction. In terms of biological role, may function as a homophilic cell adhesion molecule and be essential for tight junction integrity. May also be involved in transepithelial migration of leukocytes through adhesive interactions with jaml. The interaction between both receptors may also mediate the activation of gamma-delta T-cells, a subpopulation of T-cells residing in epithelia and involved in tissue homeostasis and repair. This chain is Coxsackievirus and adenovirus receptor homolog (cxadr), found in Danio rerio (Zebrafish).